A 758-amino-acid chain; its full sequence is MTPKESGKPISCAMKKLKGKRSKILVLSRDAGTNELKPTKGRAHRACIACRKRKVRCSGNIPCRLCQTNSYECKYDRPPRNSSVFDREVSDDSSLYAQRASHEREDSKGPISSIDYKKVVETIFPPETLRQILASSSFNSQNFLDTIKTCLLQGQLNVNQVIRQSLPKDTPWHMQTSVPLPPREIALKFIQKTWDCACVLFRFYHRPTIISILDSIYEAEKHGKQYTPEQVKTQPLIYSVLAVGALFSKEDLSKDSKATREFYTDEGYRYFLEAKNSLDFSNITDIYSIQAIFMMTIFLQCSANLKACYSFIGIALRAALKEGLHRRSSIVGPTPIQDETKKRLFWSVYKLDLYMNCILGFPSGIDESDIDQEFPLDVDDENISTIGIKFQDWRTISSCGMNNKHTKLILIMSRIYKLMYSLRRKPLEEDSRTQIVSLNDQLDNWYAQLPDILKVDTIRYRQTQPPLTVSANDTSSPYTKPKKLLYLDFLLSKIVLYKPFYHYISIDPLDIPEFQFQIHMAENCIEVAKKVIQLSYEMITQNLLSGSYWFSIHTIFFSVACLKFYVYQTEKGLIRNGKVDSDIHNATQLGSEILSLLKGASNASKRTFEVLNQLFKEFNEKTSVLSEQLLNIVKLQRQESSGALVPQLQTNNNFTKCQGELHHGQQHHQTPATSLRSILNLPQGEADLKFQNTNNESHTTTAAQEEYLDKLLAEFEEFDYSINRVLPDVIDFSALIGQDSSANNQIFSSEFSSDPTVN.

The zn(2)-C6 fungal-type DNA-binding region spans 47-73 (CIACRKRKVRCSGNIPCRLCQTNSYEC).

The protein belongs to the ASG1 family.

It localises to the nucleus. The chain is Putative transcriptional regulatory protein YJL206C from Saccharomyces cerevisiae (strain ATCC 204508 / S288c) (Baker's yeast).